The following is a 192-amino-acid chain: Large ribosomal subunit protein uL24c (192 aa).

The N-terminal 47 residues, 1–47 (MAAMAALQSSFTSLSLSSNSFLGQRLFPSPTTLQVKTEGHSPCLIVM), are a transit peptide targeting the chloroplast.

In terms of assembly, component of the chloroplast large ribosomal subunit (LSU). Mature 70S chloroplast ribosomes of higher plants consist of a small (30S) and a large (50S) subunit. The 30S small subunit contains 1 molecule of ribosomal RNA (16S rRNA) and 24 different proteins. The 50S large subunit contains 3 rRNA molecules (23S, 5S and 4.5S rRNA) and 33 different proteins.

Its subcellular location is the plastid. It localises to the chloroplast. In terms of biological role, component of the chloroplast ribosome (chloro-ribosome), a dedicated translation machinery responsible for the synthesis of chloroplast genome-encoded proteins, including proteins of the transcription and translation machinery and components of the photosynthetic apparatus. The sequence is that of Large ribosomal subunit protein uL24c (RPL24) from Spinacia oleracea (Spinach).